A 119-amino-acid polypeptide reads, in one-letter code: BLOC-1-related complex subunit 8 (119 aa).

Position 109 is a phosphoserine (S109).

The protein belongs to the BORCS8 family. In terms of assembly, component of the BLOC-one-related complex (BORC) which is composed of BLOC1S1, BLOC1S2, BORCS5, BORCS6, BORCS7, BORCS8, KXD1 and SNAPIN.

The protein localises to the lysosome membrane. Functionally, as part of the BLOC-one-related complex (BORC), it plays a role in the movement and localization of lysosomes at the cell periphery. Associated with the cytosolic face of lysosomes, BORC recruits ARL8B to the lysosomal membrane and couples lysosomes to microtubule plus-end-directed kinesin motors, driving lysosome movement toward the cell periphery. The polypeptide is BLOC-1-related complex subunit 8 (Homo sapiens (Human)).